The sequence spans 517 residues: Crotonobetaine/carnitine--CoA ligase (517 aa).

This sequence belongs to the ATP-dependent AMP-binding enzyme family.

It carries out the reaction 4-(trimethylamino)butanoate + ATP + CoA = 4-(trimethylamino)butanoyl-CoA + AMP + diphosphate. It catalyses the reaction crotonobetaine + ATP + CoA = crotonobetainyl-CoA + AMP + diphosphate. The enzyme catalyses (R)-carnitine + ATP + CoA = (R)-carnitinyl-CoA + AMP + diphosphate. Its pathway is amine and polyamine metabolism; carnitine metabolism. In terms of biological role, catalyzes the transfer of CoA to carnitine, generating the initial carnitinyl-CoA needed for the CaiB reaction cycle. Also has activity toward crotonobetaine and gamma-butyrobetaine. The protein is Crotonobetaine/carnitine--CoA ligase of Salmonella choleraesuis (strain SC-B67).